Reading from the N-terminus, the 179-residue chain is Large ribosomal subunit protein uL5 (179 aa).

Belongs to the universal ribosomal protein uL5 family. As to quaternary structure, part of the 50S ribosomal subunit; part of the 5S rRNA/L5/L18/L25 subcomplex. Contacts the 5S rRNA and the P site tRNA. Forms a bridge to the 30S subunit in the 70S ribosome.

In terms of biological role, this is one of the proteins that bind and probably mediate the attachment of the 5S RNA into the large ribosomal subunit, where it forms part of the central protuberance. In the 70S ribosome it contacts protein S13 of the 30S subunit (bridge B1b), connecting the 2 subunits; this bridge is implicated in subunit movement. Contacts the P site tRNA; the 5S rRNA and some of its associated proteins might help stabilize positioning of ribosome-bound tRNAs. This Dictyoglomus thermophilum (strain ATCC 35947 / DSM 3960 / H-6-12) protein is Large ribosomal subunit protein uL5.